The primary structure comprises 561 residues: DNA ligase B (561 aa).

The active-site N6-AMP-lysine intermediate is Lys125.

Belongs to the NAD-dependent DNA ligase family. LigB subfamily.

It catalyses the reaction NAD(+) + (deoxyribonucleotide)n-3'-hydroxyl + 5'-phospho-(deoxyribonucleotide)m = (deoxyribonucleotide)n+m + AMP + beta-nicotinamide D-nucleotide.. In terms of biological role, catalyzes the formation of phosphodiester linkages between 5'-phosphoryl and 3'-hydroxyl groups in double-stranded DNA using NAD as a coenzyme and as the energy source for the reaction. The sequence is that of DNA ligase B from Salmonella gallinarum (strain 287/91 / NCTC 13346).